Here is a 160-residue protein sequence, read N- to C-terminus: MPALILPLIEAAGHWPARGSLLGLDLGTKTIGVAVSDPDRRLATGIETVARKAFTADAQRLLALAAGRNACGFVLGLPLNMDGSEGPRVQSTRAFARNFARLTELPIGLWDERLSTAAVERELIANDVSRAKRAKIIDEHAAIYILQGALDRLATLNRAD.

The protein belongs to the YqgF nuclease family.

It is found in the cytoplasm. Functionally, could be a nuclease involved in processing of the 5'-end of pre-16S rRNA. The chain is Putative pre-16S rRNA nuclease from Rhodopseudomonas palustris (strain HaA2).